Here is a 159-residue protein sequence, read N- to C-terminus: NADH-quinone oxidoreductase subunit B (159 aa).

4 residues coordinate [4Fe-4S] cluster: C32, C33, C97, and C126.

Belongs to the complex I 20 kDa subunit family. NDH-1 is composed of 14 different subunits. Subunits NuoB, C, D, E, F, and G constitute the peripheral sector of the complex. It depends on [4Fe-4S] cluster as a cofactor.

It localises to the cell inner membrane. It catalyses the reaction a quinone + NADH + 5 H(+)(in) = a quinol + NAD(+) + 4 H(+)(out). Its function is as follows. NDH-1 shuttles electrons from NADH, via FMN and iron-sulfur (Fe-S) centers, to quinones in the respiratory chain. The immediate electron acceptor for the enzyme in this species is believed to be ubiquinone. Couples the redox reaction to proton translocation (for every two electrons transferred, four hydrogen ions are translocated across the cytoplasmic membrane), and thus conserves the redox energy in a proton gradient. In Helicobacter pylori (strain HPAG1), this protein is NADH-quinone oxidoreductase subunit B.